Consider the following 310-residue polypeptide: Ribosomal protein uL3 glutamine methyltransferase (310 aa).

It belongs to the protein N5-glutamine methyltransferase family. PrmB subfamily.

It catalyses the reaction L-glutaminyl-[ribosomal protein uL3] + S-adenosyl-L-methionine = N(5)-methyl-L-glutaminyl-[ribosomal protein uL3] + S-adenosyl-L-homocysteine + H(+). Its function is as follows. Specifically methylates large ribosomal subunit protein uL3 on 'Gln-150'. The protein is Ribosomal protein uL3 glutamine methyltransferase of Salmonella typhi.